A 243-amino-acid chain; its full sequence is Peptidyl-tRNA hydrolase (243 aa).

A tRNA-binding site is contributed by Tyr-14. His-19 (proton acceptor) is an active-site residue. Phe-64, Asn-66, and Asn-112 together coordinate tRNA. Positions Lys-190 to Lys-205 are enriched in basic and acidic residues. Residues Lys-190–Asp-243 are disordered. Over residues Ala-208–Gln-221 the composition is skewed to polar residues.

The protein belongs to the PTH family. As to quaternary structure, monomer.

The protein resides in the cytoplasm. It carries out the reaction an N-acyl-L-alpha-aminoacyl-tRNA + H2O = an N-acyl-L-amino acid + a tRNA + H(+). Functionally, hydrolyzes ribosome-free peptidyl-tRNAs (with 1 or more amino acids incorporated), which drop off the ribosome during protein synthesis, or as a result of ribosome stalling. Catalyzes the release of premature peptidyl moieties from peptidyl-tRNA molecules trapped in stalled 50S ribosomal subunits, and thus maintains levels of free tRNAs and 50S ribosomes. This is Peptidyl-tRNA hydrolase from Rhizobium johnstonii (strain DSM 114642 / LMG 32736 / 3841) (Rhizobium leguminosarum bv. viciae).